The following is a 37-amino-acid chain: Delta/kappa-conotoxin Mo3964 (37 aa).

3 cysteine pairs are disulfide-bonded: Cys-4-Cys-12, Cys-11-Cys-27, and Cys-21-Cys-34.

In terms of tissue distribution, expressed by the venom duct.

Its subcellular location is the secreted. Its function is as follows. This toxin reduces the outward currents that are due to the opening of voltage-gated potassium channels in DRG neurons. In addition, leftward shift in the presence of this toxin is observed in averaged normalized conductance-voltage plot of outward sodium currents (Nav1.2/SCN2A). The polypeptide is Delta/kappa-conotoxin Mo3964 (Conus monile (Necklace cone)).